A 21-amino-acid polypeptide reads, in one-letter code: Outer membrane protein P2 (21 aa).

Disulfide bond interactions within and between MOMP molecules and other components form high molecular-weight oligomers.

The protein resides in the cell outer membrane. Functionally, structural rigidity of the outer membrane of elementary bodies and porin forming, permitting diffusion of solutes through the intracellular reticulate body membrane. Binds carcinoembryonic antigen (CEA). This is Outer membrane protein P2 from Glaesserella parasuis (Haemophilus parasuis).